Here is a 325-residue protein sequence, read N- to C-terminus: Phospho-N-acetylmuramoyl-pentapeptide-transferase (325 aa).

Helical transmembrane passes span 5–25 (VLLLTLILSFVITVILSPIFI), 57–77 (LMILLSILVSSLFVSFQLSIF), 81–101 (VLLLLLVTIGFGVLGFIDDFI), 117–137 (LIGQLVVAVLFYLGLRNMGLS), 146–166 (SLSIDFGWFYLPLVIVMLVGA), 178–198 (GLVAGTGAIAFGAFAIIAWAT), 200–220 (YFEVAIFSAAVVGAVLGFLVF), 227–247 (VFMGDTGSLALGGAIAAIAIM), 252–272 (ILLIIIGGVFVIETLSVIIQV), and 304–324 (VTFWTVGLLFAMLAIYLEVWI).

It belongs to the glycosyltransferase 4 family. MraY subfamily. Mg(2+) is required as a cofactor.

The protein localises to the cell membrane. The catalysed reaction is UDP-N-acetyl-alpha-D-muramoyl-L-alanyl-gamma-D-glutamyl-meso-2,6-diaminopimeloyl-D-alanyl-D-alanine + di-trans,octa-cis-undecaprenyl phosphate = di-trans,octa-cis-undecaprenyl diphospho-N-acetyl-alpha-D-muramoyl-L-alanyl-D-glutamyl-meso-2,6-diaminopimeloyl-D-alanyl-D-alanine + UMP. It functions in the pathway cell wall biogenesis; peptidoglycan biosynthesis. Functionally, catalyzes the initial step of the lipid cycle reactions in the biosynthesis of the cell wall peptidoglycan: transfers peptidoglycan precursor phospho-MurNAc-pentapeptide from UDP-MurNAc-pentapeptide onto the lipid carrier undecaprenyl phosphate, yielding undecaprenyl-pyrophosphoryl-MurNAc-pentapeptide, known as lipid I. This is Phospho-N-acetylmuramoyl-pentapeptide-transferase from Halalkalibacterium halodurans (strain ATCC BAA-125 / DSM 18197 / FERM 7344 / JCM 9153 / C-125) (Bacillus halodurans).